The sequence spans 185 residues: Adenine phosphoribosyltransferase (185 aa).

It belongs to the purine/pyrimidine phosphoribosyltransferase family. Homodimer.

The protein localises to the cytoplasm. The enzyme catalyses AMP + diphosphate = 5-phospho-alpha-D-ribose 1-diphosphate + adenine. It participates in purine metabolism; AMP biosynthesis via salvage pathway; AMP from adenine: step 1/1. Functionally, catalyzes a salvage reaction resulting in the formation of AMP, that is energically less costly than de novo synthesis. The polypeptide is Adenine phosphoribosyltransferase (Corynebacterium glutamicum (strain ATCC 13032 / DSM 20300 / JCM 1318 / BCRC 11384 / CCUG 27702 / LMG 3730 / NBRC 12168 / NCIMB 10025 / NRRL B-2784 / 534)).